A 358-amino-acid polypeptide reads, in one-letter code: Uroporphyrinogen decarboxylase (358 aa).

Substrate contacts are provided by residues 29–33 (RQAGR), phenylalanine 48, aspartate 79, tyrosine 155, serine 210, and histidine 330.

The protein belongs to the uroporphyrinogen decarboxylase family. In terms of assembly, homodimer.

It localises to the cytoplasm. It catalyses the reaction uroporphyrinogen III + 4 H(+) = coproporphyrinogen III + 4 CO2. Its pathway is porphyrin-containing compound metabolism; protoporphyrin-IX biosynthesis; coproporphyrinogen-III from 5-aminolevulinate: step 4/4. Catalyzes the decarboxylation of four acetate groups of uroporphyrinogen-III to yield coproporphyrinogen-III. In Bordetella parapertussis (strain 12822 / ATCC BAA-587 / NCTC 13253), this protein is Uroporphyrinogen decarboxylase.